The primary structure comprises 291 residues: Small ribosomal subunit biogenesis GTPase RsgA 1 (291 aa).

The CP-type G domain maps to 63–221; sequence ENALVRPPVA…VADTPGFSSI (159 aa). Residues 112–115 and 164–172 contribute to the GTP site; these read SKMD and GQSGVGKST. 4 residues coordinate Zn(2+): Cys245, Cys250, His252, and Cys258.

This sequence belongs to the TRAFAC class YlqF/YawG GTPase family. RsgA subfamily. As to quaternary structure, monomer. Associates with 30S ribosomal subunit, binds 16S rRNA. Zn(2+) serves as cofactor.

Its subcellular location is the cytoplasm. One of several proteins that assist in the late maturation steps of the functional core of the 30S ribosomal subunit. Helps release RbfA from mature subunits. May play a role in the assembly of ribosomal proteins into the subunit. Circularly permuted GTPase that catalyzes slow GTP hydrolysis, GTPase activity is stimulated by the 30S ribosomal subunit. The polypeptide is Small ribosomal subunit biogenesis GTPase RsgA 1 (Listeria monocytogenes serotype 4b (strain F2365)).